Consider the following 352-residue polypeptide: Phosphoribosylformylglycinamidine cyclo-ligase (352 aa).

This sequence belongs to the AIR synthase family.

It is found in the cytoplasm. The enzyme catalyses 2-formamido-N(1)-(5-O-phospho-beta-D-ribosyl)acetamidine + ATP = 5-amino-1-(5-phospho-beta-D-ribosyl)imidazole + ADP + phosphate + H(+). The protein operates within purine metabolism; IMP biosynthesis via de novo pathway; 5-amino-1-(5-phospho-D-ribosyl)imidazole from N(2)-formyl-N(1)-(5-phospho-D-ribosyl)glycinamide: step 2/2. This is Phosphoribosylformylglycinamidine cyclo-ligase from Saccharophagus degradans (strain 2-40 / ATCC 43961 / DSM 17024).